A 545-amino-acid polypeptide reads, in one-letter code: Glucose-6-phosphate isomerase (545 aa).

Glu351 acts as the Proton donor in catalysis. Catalysis depends on residues His382 and Lys510.

It belongs to the GPI family.

It localises to the cytoplasm. The catalysed reaction is alpha-D-glucose 6-phosphate = beta-D-fructose 6-phosphate. It functions in the pathway carbohydrate biosynthesis; gluconeogenesis. The protein operates within carbohydrate degradation; glycolysis; D-glyceraldehyde 3-phosphate and glycerone phosphate from D-glucose: step 2/4. Catalyzes the reversible isomerization of glucose-6-phosphate to fructose-6-phosphate. In Shewanella loihica (strain ATCC BAA-1088 / PV-4), this protein is Glucose-6-phosphate isomerase.